Here is a 448-residue protein sequence, read N- to C-terminus: Exodeoxyribonuclease 7 large subunit (448 aa).

The protein belongs to the XseA family. As to quaternary structure, heterooligomer composed of large and small subunits.

Its subcellular location is the cytoplasm. The enzyme catalyses Exonucleolytic cleavage in either 5'- to 3'- or 3'- to 5'-direction to yield nucleoside 5'-phosphates.. In terms of biological role, bidirectionally degrades single-stranded DNA into large acid-insoluble oligonucleotides, which are then degraded further into small acid-soluble oligonucleotides. The chain is Exodeoxyribonuclease 7 large subunit from Histophilus somni (strain 129Pt) (Haemophilus somnus).